We begin with the raw amino-acid sequence, 163 residues long: Nucleotide-binding protein YPDSF_2805 (163 aa).

The protein belongs to the YajQ family.

Functionally, nucleotide-binding protein. The chain is Nucleotide-binding protein YPDSF_2805 from Yersinia pestis (strain Pestoides F).